The chain runs to 81 residues: Acyl carrier protein (81 aa).

The Carrier domain occupies 4-79; sequence SEIFGKVKDI…AAVDFIAGKV (76 aa). O-(pantetheine 4'-phosphoryl)serine is present on serine 39.

The protein belongs to the acyl carrier protein (ACP) family. In terms of processing, 4'-phosphopantetheine is transferred from CoA to a specific serine of apo-ACP by AcpS. This modification is essential for activity because fatty acids are bound in thioester linkage to the sulfhydryl of the prosthetic group.

The protein resides in the cytoplasm. The protein operates within lipid metabolism; fatty acid biosynthesis. In terms of biological role, carrier of the growing fatty acid chain in fatty acid biosynthesis. The sequence is that of Acyl carrier protein from Acaryochloris marina (strain MBIC 11017).